The sequence spans 270 residues: Glucosamine-6-phosphate deaminase (270 aa).

Aspartate 68 serves as the catalytic Proton acceptor; for enolization step. Aspartate 145 (for ring-opening step) is an active-site residue. Histidine 147 functions as the Proton acceptor; for ring-opening step in the catalytic mechanism. Glutamate 152 serves as the catalytic For ring-opening step.

Belongs to the glucosamine/galactosamine-6-phosphate isomerase family. NagB subfamily.

It catalyses the reaction alpha-D-glucosamine 6-phosphate + H2O = beta-D-fructose 6-phosphate + NH4(+). The protein operates within amino-sugar metabolism; N-acetylneuraminate degradation; D-fructose 6-phosphate from N-acetylneuraminate: step 5/5. In terms of biological role, catalyzes the reversible isomerization-deamination of glucosamine 6-phosphate (GlcN6P) to form fructose 6-phosphate (Fru6P) and ammonium ion. This is Glucosamine-6-phosphate deaminase from Bifidobacterium longum (strain NCC 2705).